The primary structure comprises 858 residues: Protein 4.1 (858 aa).

Residues 1–125 (MTTEKSLAAE…KEIELGNSLD (125 aa)) are disordered. Ser-14 bears the Phosphoserine mark. Low complexity predominate over residues 31 to 50 (QQETQLEEASQAAAAEGSDQ). A Phosphothreonine modification is found at Thr-62. Basic and acidic residues predominate over residues 63–77 (PTHEDLTKNKERTSE). A compositionally biased stretch (low complexity) spans 78–89 (SRGLSRLLSSFL). A phosphoserine mark is found at Ser-86, Ser-87, Ser-97, Ser-106, Ser-123, Ser-151, Ser-153, and Ser-154. Positions 103–119 (EVESEKEKGEGGQKEIE) are enriched in basic and acidic residues. Residues 155-208 (IETQPAQEEHREDPDSETKEGEGIEECSGTEVKEDPESRAEREPEASQKPVRRH) are disordered. Composition is skewed to basic and acidic residues over residues 161–176 (QEEH…KEGE) and 185–200 (EVKE…EPEA). At Ser-192 the chain carries Phosphoserine. The FERM domain maps to 211–492 (MHCKVSLLDD…EHHTFFRLTS (282 aa)). Tyr-223 carries the phosphotyrosine modification. A Phosphothreonine modification is found at Thr-379. Residues 495–608 (TIPKSKFLAL…PAEPEPTEAW (114 aa)) form a hydrophilic region. Positions 518 to 636 (TRQASALIDR…TQKLAGKGED (119 aa)) are disordered. Phosphoserine is present on residues Ser-522, Ser-541, Ser-543, and Ser-556. Composition is skewed to basic and acidic residues over residues 581–595 (TPKE…RGEE) and 606–615 (EAWKVEKTHT). The segment at 609 to 707 (KVEKTHTEVT…WDKRLSTHSP (99 aa)) is spectrin--actin-binding. Over residues 616–629 (EVTVPTSNGDQTQK) the composition is skewed to polar residues. Position 654 is a phosphotyrosine (Tyr-654). Ser-658, Ser-668, Ser-678, Ser-703, and Ser-706 each carry phosphoserine. Residues 710–858 (TLNINGQVPT…VHQETEISEE (149 aa)) form a C-terminal (CTD) region. Thr-730 and Thr-853 each carry phosphothreonine.

As to quaternary structure, binds with a high affinity to glycophorin and with lower affinity to band III protein. Associates with the nuclear mitotic apparatus. Binds calmodulin, CPAP and DLG1. Also found to associate with contractile apparatus and tight junctions. Interacts with NUMA1; this interaction is negatively regulated by CDK1 during metaphase and promotes anaphase-specific localization of NUMA1 in symmetrically dividing cells. Interacts with ATP2B1; regulates small intestinal calcium absorption through regulation of membrane expression of ATP2B1. O-glycosylated; contains N-acetylglucosamine side chains in the C-terminal domain. In terms of processing, phosphorylated at multiple sites by different protein kinases and each phosphorylation event selectively modulates the protein's functions. Post-translationally, phosphorylation on Tyr-654 reduces the ability of 4.1 to promote the assembly of the spectrin/actin/4.1 ternary complex.

The protein resides in the nucleus. It localises to the cytoplasm. It is found in the cytoskeleton. Its subcellular location is the cell cortex. Its function is as follows. Protein 4.1 is a major structural element of the erythrocyte membrane skeleton. It plays a key role in regulating membrane physical properties of mechanical stability and deformability by stabilizing spectrin-actin interaction. Recruits DLG1 to membranes. Required for dynein-dynactin complex and NUMA1 recruitment at the mitotic cell cortex during anaphase. The chain is Protein 4.1 from Mus musculus (Mouse).